We begin with the raw amino-acid sequence, 615 residues long: Putative lipase ATG15 (615 aa).

Over 1 to 22 (MKQLGEEHPLISTKRPRAKKRR) the chain is Cytoplasmic. Residues 23–43 (SIAICAAVLTLIAFGFIRFVP) form a helical; Signal-anchor for type II membrane protein membrane-spanning segment. The Lumenal segment spans residues 44–615 (KDILAGGWYE…NSAAHHVSSI (572 aa)). N253, N276, and N360 each carry an N-linked (GlcNAc...) asparagine glycan. S378 (charge relay system) is an active-site residue. The segment at 520-559 (NKNDEPPLPNPLHPKPPSTVRSSNMPHEQSPNASRSLSSL) is disordered. The segment covering 525 to 536 (PPLPNPLHPKPP) has biased composition (pro residues). Polar residues predominate over residues 538 to 559 (TVRSSNMPHEQSPNASRSLSSL). A glycan (N-linked (GlcNAc...) asparagine) is linked at N551.

This sequence belongs to the AB hydrolase superfamily. Lipase family. As to quaternary structure, binds to both phosphatidylinositol (PI) and phosphatidylinositol 3,5-bisphosphate (PIP2).

The protein localises to the endosome. The protein resides in the multivesicular body membrane. It localises to the prevacuolar compartment membrane. The catalysed reaction is a triacylglycerol + H2O = a diacylglycerol + a fatty acid + H(+). Lipase which is essential for lysis of subvacuolar cytoplasm to vacuole targeted bodies and intravacuolar autophagic bodies. Involved in the lysis of intravacuolar multivesicular body (MVB) vesicles. The intravacuolar membrane disintegration by ATG15 is critical to life span extension. The chain is Putative lipase ATG15 (ATG15) from Debaryomyces hansenii (strain ATCC 36239 / CBS 767 / BCRC 21394 / JCM 1990 / NBRC 0083 / IGC 2968) (Yeast).